A 99-amino-acid chain; its full sequence is LDVLLGSDDGELAFVPNNFSVPSGEKITFKNNAGFPHNVVFDEDEIPSGVDASKISMDEADLLNAPGETYAVTLTEKGSYSFYCSPHQGAGMVGKVTVN.

The Plastocyanin-like domain occupies 1–99; that stretch reads LDVLLGSDDG…AGMVGKVTVN (99 aa). Cu cation contacts are provided by H37, C84, H87, and M92.

This sequence belongs to the plastocyanin family. It depends on Cu(2+) as a cofactor.

It is found in the plastid. The protein localises to the chloroplast thylakoid membrane. In terms of biological role, participates in electron transfer between P700 and the cytochrome b6-f complex in photosystem I. The protein is Plastocyanin (PETE) of Mercurialis perennis (Dog's mercury).